The primary structure comprises 65 residues: UPF0434 protein Rpal_0270 (65 aa).

The protein belongs to the UPF0434 family.

The polypeptide is UPF0434 protein Rpal_0270 (Rhodopseudomonas palustris (strain TIE-1)).